Consider the following 654-residue polypeptide: Protein fem-1 homolog A-like (654 aa).

ANK repeat units lie at residues 2 to 31, 40 to 70, 82 to 111, 115 to 145, 149 to 178, 182 to 211, and 214 to 243; these read DLHTAVYNAAHDGKLPLLQKLLASRGREEL, GGGTPLLIAARRGHLDVVEYLVDHCGASVEA, EGAPPLWAASAAGHLAVVRSLLHRGASVNR, TNSTPLRAACFNGHLDVVRCLVGEHKADLEV, HGHTCLMISCYKGHREIARYLLERGAQVNR, KGNTALHDCAESGSLEILQLLLSCHARMER, and YGMTPLLAASITGHTNIVEYLIQEQPSHEQ. At Ser108 the chain carries Phosphoserine. Residues 241–265 form a disordered region; sequence HEQLSGTELPGEGSSQMAGNHCSTP. Residues 253–263 are compositionally biased toward polar residues; it reads GSSQMAGNHCS. 2 TPR repeats span residues 283 to 317 and 375 to 408; these read VEALELLGATYVDKKRDLLGALKHWRRAMELRHQG and SYYIRYRGAVYADSGNFERCIRLWKYALDMQQNN. ANK repeat units lie at residues 519-561 and 565-594; these read NGFT…DPDS and DNNSPLHIAAQNNCPAIMDALIEAGAHMDA. A Phosphoserine modification is found at Ser608.

Belongs to the fem-1 family. In terms of assembly, component of a CRL2 E3 ubiquitin-protein ligase complex, also named ECS (Elongin BC-CUL2/5-SOCS-box protein) complex, composed of CUL2, Elongin BC (ELOB and ELOC), RBX1 and substrate-specific adapter FEM1A.

The protein resides in the mitochondrion. It is found in the cytoplasm. The protein operates within protein modification; protein ubiquitination. Functionally, substrate-recognition component of a Cul2-RING (CRL2) E3 ubiquitin-protein ligase complex of the DesCEND (destruction via C-end degrons) pathway, which recognizes a C-degron located at the extreme C terminus of target proteins, leading to their ubiquitination and degradation. The C-degron recognized by the DesCEND pathway is usually a motif of less than ten residues and can be present in full-length proteins, truncated proteins or proteolytically cleaved forms. The CRL2(FEM1A) complex specifically recognizes proteins with an arginine at the C-terminus: recognizes and binds proteins ending with -Lys/Arg-Xaa-Arg and -Lys/Arg-Xaa-Xaa-Arg C-degrons, such as SIL1 or OR51B2, leading to their ubiquitination and degradation. This Mus musculus (Mouse) protein is Protein fem-1 homolog A-like.